The primary structure comprises 156 residues: Ribosomal RNA large subunit methyltransferase H (156 aa).

S-adenosyl-L-methionine-binding positions include Leu73, Gly104, and 123–128 (LSALTL).

This sequence belongs to the RNA methyltransferase RlmH family. Homodimer.

It localises to the cytoplasm. The catalysed reaction is pseudouridine(1915) in 23S rRNA + S-adenosyl-L-methionine = N(3)-methylpseudouridine(1915) in 23S rRNA + S-adenosyl-L-homocysteine + H(+). Functionally, specifically methylates the pseudouridine at position 1915 (m3Psi1915) in 23S rRNA. The polypeptide is Ribosomal RNA large subunit methyltransferase H (Shewanella denitrificans (strain OS217 / ATCC BAA-1090 / DSM 15013)).